The sequence spans 562 residues: Arf-GAP domain and FG repeat-containing protein 1 (562 aa).

One can recognise an Arf-GAP domain in the interval Glu11–Val135. The C4-type zinc finger occupies Cys29–Cys52. Phosphoserine is present on Ser167. Residues Ala168–Lys194 form a disordered region. Positions Gly176–Gln191 are enriched in polar residues. A Phosphothreonine modification is found at Thr177. Phosphoserine occurs at positions 181 and 362. The O-linked (GlcNAc) serine glycan is linked to Ser367.

Interacts with EPS15R and EPS15. Interacts with FCHO1. In terms of processing, O-glycosylated.

It is found in the nucleus. Its subcellular location is the cytoplasmic vesicle. Functionally, required for vesicle docking or fusion during acrosome biogenesis. May play a role in RNA trafficking or localization. The chain is Arf-GAP domain and FG repeat-containing protein 1 (AGFG1) from Bos taurus (Bovine).